We begin with the raw amino-acid sequence, 379 residues long: Queuine tRNA-ribosyltransferase (379 aa).

The Proton acceptor role is filled by aspartate 94. Substrate contacts are provided by residues 94-98 (DSGGF), aspartate 148, glutamine 191, and glycine 218. The interval 249 to 255 (GVGSPDS) is RNA binding. Aspartate 268 functions as the Nucleophile in the catalytic mechanism. Positions 273–277 (TRIAR) are RNA binding; important for wobble base 34 recognition. Positions 306, 308, 311, and 337 each coordinate Zn(2+).

The protein belongs to the queuine tRNA-ribosyltransferase family. As to quaternary structure, homodimer. Within each dimer, one monomer is responsible for RNA recognition and catalysis, while the other monomer binds to the replacement base PreQ1. Requires Zn(2+) as cofactor.

The catalysed reaction is 7-aminomethyl-7-carbaguanine + guanosine(34) in tRNA = 7-aminomethyl-7-carbaguanosine(34) in tRNA + guanine. It functions in the pathway tRNA modification; tRNA-queuosine biosynthesis. Catalyzes the base-exchange of a guanine (G) residue with the queuine precursor 7-aminomethyl-7-deazaguanine (PreQ1) at position 34 (anticodon wobble position) in tRNAs with GU(N) anticodons (tRNA-Asp, -Asn, -His and -Tyr). Catalysis occurs through a double-displacement mechanism. The nucleophile active site attacks the C1' of nucleotide 34 to detach the guanine base from the RNA, forming a covalent enzyme-RNA intermediate. The proton acceptor active site deprotonates the incoming PreQ1, allowing a nucleophilic attack on the C1' of the ribose to form the product. After dissociation, two additional enzymatic reactions on the tRNA convert PreQ1 to queuine (Q), resulting in the hypermodified nucleoside queuosine (7-(((4,5-cis-dihydroxy-2-cyclopenten-1-yl)amino)methyl)-7-deazaguanosine). The protein is Queuine tRNA-ribosyltransferase of Listeria monocytogenes serotype 4a (strain HCC23).